A 124-amino-acid chain; its full sequence is Tax1-binding protein 3 (124 aa).

Ser2 is subject to N-acetylserine. The PDZ domain maps to 15 to 112 (RVEIHKLRQG…EVVRLLVTRQ (98 aa)). The residue at position 61 (Ser61) is a Phosphoserine.

As to quaternary structure, interacts (via its PDZ domain) with GLS2. Interacts (via its PDZ domain) with RTKN (via the C-terminal region); this interaction facilitates Rho-mediated activation of the FOS serum response element (SRE). Interacts (via PDZ domain) with ARHGEF16. Interacts (via PDZ domain) with KCNJ4 (via C-terminus). Competes with LIN7A for KCNJ4 binding. Interacts (via its PDZ domain) with CTNNB1; this interaction inhibits the transcriptional activity of CTNNB1. Interacts with ADGRB2.

Its subcellular location is the cytoplasm. It localises to the nucleus. It is found in the cell membrane. Functionally, may regulate a number of protein-protein interactions by competing for PDZ domain binding sites. Binds CTNNB1 and may thereby act as an inhibitor of the Wnt signaling pathway. Competes with LIN7A for KCNJ4 binding, and thereby promotes KCNJ4 internalization. May play a role in the Rho signaling pathway. In Mus musculus (Mouse), this protein is Tax1-binding protein 3.